Consider the following 226-residue polypeptide: V-type proton ATPase subunit E 1 (226 aa).

Ala2 carries the N-acetylalanine modification. Tyr56 is modified (phosphotyrosine).

It belongs to the V-ATPase E subunit family. In terms of assembly, V-ATPase is a heteromultimeric enzyme made up of two complexes: the ATP-hydrolytic V1 complex and the proton translocation V0 complex. The V1 complex consists of three catalytic AB heterodimers that form a heterohexamer, three peripheral stalks each consisting of EG heterodimers, one central rotor including subunits D and F, and the regulatory subunits C and H. The proton translocation complex V0 consists of the proton transport subunit a, a ring of proteolipid subunits c9c'', rotary subunit d, subunits e and f, and the accessory subunits ATP6AP1/Ac45 and ATP6AP2/PRR. Interacts with RABL2/RABL2A; binds preferentially to GTP-bound RABL2. Interacts with ALDOC. Interacts with RAB11B. Expressed within the midpiece of sperm tail (at protein level). Kidney; localizes to early distal nephron, encompassing thick ascending limbs and distal convoluted tubules (at protein level).

It is found in the apical cell membrane. It localises to the cytoplasmic vesicle. Its subcellular location is the secretory vesicle. The protein localises to the synaptic vesicle membrane. The protein resides in the clathrin-coated vesicle membrane. Its function is as follows. Subunit of the V1 complex of vacuolar(H+)-ATPase (V-ATPase), a multisubunit enzyme composed of a peripheral complex (V1) that hydrolyzes ATP and a membrane integral complex (V0) that translocates protons. V-ATPase is responsible for acidifying and maintaining the pH of intracellular compartments and in some cell types, is targeted to the plasma membrane, where it is responsible for acidifying the extracellular environment. The sequence is that of V-type proton ATPase subunit E 1 (Atp6v1e1) from Mus musculus (Mouse).